The following is a 70-amino-acid chain: Small ribosomal subunit protein bS21 (70 aa).

Residues 39–70 form a disordered region; sequence EKPTTERKRKKAAAVSRTRKRLRSQMLPKKLY. Over residues 45 to 61 the composition is skewed to basic residues; the sequence is RKRKKAAAVSRTRKRLR.

The protein belongs to the bacterial ribosomal protein bS21 family.

The polypeptide is Small ribosomal subunit protein bS21 (Ralstonia nicotianae (strain ATCC BAA-1114 / GMI1000) (Ralstonia solanacearum)).